Reading from the N-terminus, the 424-residue chain is Histidine--tRNA ligase (424 aa).

The protein belongs to the class-II aminoacyl-tRNA synthetase family. In terms of assembly, homodimer.

The protein resides in the cytoplasm. It catalyses the reaction tRNA(His) + L-histidine + ATP = L-histidyl-tRNA(His) + AMP + diphosphate + H(+). This chain is Histidine--tRNA ligase (hisS), found in Bacillus subtilis (strain 168).